The chain runs to 537 residues: CTP synthase (537 aa).

The segment at 1 to 265 (MTKFIFVTGG…GKYLVKRLGL (265 aa)) is amidoligase domain. Ser13 provides a ligand contact to CTP. Ser13 serves as a coordination point for UTP. 14–19 (GLGKGI) serves as a coordination point for ATP. L-glutamine is bound at residue Tyr54. Residue Asp71 coordinates ATP. Mg(2+) contacts are provided by Asp71 and Glu139. Residues 146-148 (DIE), 186-191 (KTKPTQ), and Lys222 contribute to the CTP site. UTP contacts are provided by residues 186 to 191 (KTKPTQ) and Lys222. A Glutamine amidotransferase type-1 domain is found at 290-532 (EIAIVGKYVK…VKAAKEYKQE (243 aa)). Gly351 is an L-glutamine binding site. Cys378 functions as the Nucleophile; for glutamine hydrolysis in the catalytic mechanism. Residues 379–382 (FGFQ), Glu402, and Arg459 contribute to the L-glutamine site. Residues His505 and Glu507 contribute to the active site.

The protein belongs to the CTP synthase family. In terms of assembly, homotetramer.

The enzyme catalyses UTP + L-glutamine + ATP + H2O = CTP + L-glutamate + ADP + phosphate + 2 H(+). The catalysed reaction is L-glutamine + H2O = L-glutamate + NH4(+). It catalyses the reaction UTP + NH4(+) + ATP = CTP + ADP + phosphate + 2 H(+). It participates in pyrimidine metabolism; CTP biosynthesis via de novo pathway; CTP from UDP: step 2/2. Allosterically activated by GTP, when glutamine is the substrate; GTP has no effect on the reaction when ammonia is the substrate. The allosteric effector GTP functions by stabilizing the protein conformation that binds the tetrahedral intermediate(s) formed during glutamine hydrolysis. Inhibited by the product CTP, via allosteric rather than competitive inhibition. In terms of biological role, catalyzes the ATP-dependent amination of UTP to CTP with either L-glutamine or ammonia as the source of nitrogen. Regulates intracellular CTP levels through interactions with the four ribonucleotide triphosphates. This chain is CTP synthase, found in Pyrococcus abyssi (strain GE5 / Orsay).